The chain runs to 227 residues: Pro-thyrotropin-releasing hormone-A (227 aa).

Positions methionine 1–serine 15 are cleaved as a signal peptide. Glutamine 75 bears the Pyrrolidone carboxylic acid mark. At proline 77 the chain carries Proline amide. Glutamine 89 carries the pyrrolidone carboxylic acid modification. Proline amide is present on proline 91. Position 107 is a pyrrolidone carboxylic acid (glutamine 107). 2 disordered regions span residues glutamine 107–glutamate 128 and arginine 151–glycine 204. Proline 109 is subject to Proline amide. A compositionally biased stretch (basic and acidic residues) spans arginine 112–glutamate 128. Glutamine 121 bears the Pyrrolidone carboxylic acid mark. Proline amide is present on proline 123. Glutamine 153 is subject to Pyrrolidone carboxylic acid. Proline 155 carries the post-translational modification Proline amide. Pyrrolidone carboxylic acid is present on glutamine 168. At proline 170 the chain carries Proline amide. The span at glutamate 184 to proline 201 shows a compositional bias: basic and acidic residues. Glutamine 193 is subject to Pyrrolidone carboxylic acid. At proline 195 the chain carries Proline amide.

Belongs to the TRH family.

The protein localises to the secreted. The protein is Pro-thyrotropin-releasing hormone-A (trh-a) of Xenopus laevis (African clawed frog).